A 135-amino-acid polypeptide reads, in one-letter code: Ribosome-binding factor A (135 aa).

It belongs to the RbfA family. Monomer. Binds 30S ribosomal subunits, but not 50S ribosomal subunits or 70S ribosomes.

The protein resides in the cytoplasm. Functionally, one of several proteins that assist in the late maturation steps of the functional core of the 30S ribosomal subunit. Associates with free 30S ribosomal subunits (but not with 30S subunits that are part of 70S ribosomes or polysomes). Required for efficient processing of 16S rRNA. May interact with the 5'-terminal helix region of 16S rRNA. The protein is Ribosome-binding factor A of Dinoroseobacter shibae (strain DSM 16493 / NCIMB 14021 / DFL 12).